The sequence spans 387 residues: Synaptotagmin-8 (387 aa).

Topologically, residues 1-34 (MGHPPVSPSAPAPAGTTAIPGLIPDLVAGTPWPR) are extracellular. The helical; Signal-anchor for type III membrane protein transmembrane segment at 35 to 55 (WALIAGALAAGVLLVSCLLCA) threads the bilayer. The Cytoplasmic portion of the chain corresponds to 56 to 387 (ACCCCRRHRK…LRLRLPLPHS (332 aa)). Positions 70–99 (KESVGLGSARGTTTTHLVQPDVDGLESSPG) are disordered. C2 domains are found at residues 103 to 219 (QWGC…EHWY) and 231 to 346 (QVGE…QHWA).

Belongs to the synaptotagmin family. In terms of assembly, homodimer or homooligomer. Homodimerization and homooligomerization do not depend on Ca(2+). Interacts with SYNCRIP isoform 2 C-terminus. Binds inositol 1,3,4,5-tetrakisphosphate (IP4). Binds to AP2 in a Ca(2+)-independent manner. Interacts with STX1A, STX1B and STX2; the interaction is Ca(2+)-dependent.

The protein localises to the cell membrane. It is found in the cytoplasmic vesicle. It localises to the secretory vesicle. Its subcellular location is the acrosome. Its function is as follows. Involved in the trafficking and exocytosis of secretory vesicles in non-neuronal tissues. Mediates Ca(2+)-regulation of exocytosis acrosomal reaction in sperm. May mediate Ca(2+)-regulation of exocytosis in insulin secreted cells. This Homo sapiens (Human) protein is Synaptotagmin-8 (SYT8).